Consider the following 534-residue polypeptide: Calcium-dependent protein kinase 29 (534 aa).

The segment at 1-72 is disordered; that stretch reads MGFCFSKFGK…STSSGSQIGP (72 aa). A lipid anchor (N-myristoyl glycine) is attached at G2. Residues 16–27 show a composition bias toward low complexity; the sequence is IPISSSSDSSPP. The span at 49-63 shows a compositional bias: pro residues; it reads NPQPKPKPAPPPPPS. The Protein kinase domain occupies 85–343; sequence YDLHKELGRG…AAEALEHPWM (259 aa). ATP contacts are provided by residues 91 to 99 and K114; that span reads LGRGQFGIT. D209 functions as the Proton acceptor in the catalytic mechanism. S249 is modified (phosphoserine). The tract at residues 348–378 is autoinhibitory domain; sequence ISDKPINSAVLVRMKQFRAMNKLKKLALKVI. EF-hand domains are found at residues 385–420, 421–456, 457–492, and 493–527; these read EEIK…LGSK, LTES…RHRL, EKEE…YGMG, and DDAT…GTTD. Ca(2+) contacts are provided by D398, D400, S402, T404, E409, D434, D436, S438, T440, E445, D470, D472, S474, E481, D505, D507, D509, R511, and E516.

The protein belongs to the protein kinase superfamily. Ser/Thr protein kinase family. CDPK subfamily.

The protein resides in the membrane. It carries out the reaction L-seryl-[protein] + ATP = O-phospho-L-seryl-[protein] + ADP + H(+). The enzyme catalyses L-threonyl-[protein] + ATP = O-phospho-L-threonyl-[protein] + ADP + H(+). Its activity is regulated as follows. Activated by calcium. Autophosphorylation may play an important role in the regulation of the kinase activity. Functionally, may play a role in signal transduction pathways that involve calcium as a second messenger. The sequence is that of Calcium-dependent protein kinase 29 (CPK29) from Arabidopsis thaliana (Mouse-ear cress).